The following is a 293-amino-acid chain: tRNA pseudouridine synthase A (293 aa).

Aspartate 67 acts as the Nucleophile in catalysis. Tyrosine 125 lines the substrate pocket.

It belongs to the tRNA pseudouridine synthase TruA family. In terms of assembly, homodimer.

The enzyme catalyses uridine(38/39/40) in tRNA = pseudouridine(38/39/40) in tRNA. Its function is as follows. Formation of pseudouridine at positions 38, 39 and 40 in the anticodon stem and loop of transfer RNAs. This chain is tRNA pseudouridine synthase A, found in Synechococcus sp. (strain CC9605).